The primary structure comprises 103 residues: Sec-independent protein translocase protein TatA (103 aa).

Residues Met-1–Ala-21 traverse the membrane as a helical segment. Positions Val-42–Pro-103 are disordered. Residues Pro-52 to Pro-90 are compositionally biased toward low complexity. Residues Gln-94 to Pro-103 show a composition bias toward basic and acidic residues.

This sequence belongs to the TatA/E family. In terms of assembly, the Tat system comprises two distinct complexes: a TatABC complex, containing multiple copies of TatA, TatB and TatC subunits, and a separate TatA complex, containing only TatA subunits. Substrates initially bind to the TatABC complex, which probably triggers association of the separate TatA complex to form the active translocon.

It is found in the cell membrane. Functionally, part of the twin-arginine translocation (Tat) system that transports large folded proteins containing a characteristic twin-arginine motif in their signal peptide across membranes. TatA could form the protein-conducting channel of the Tat system. This chain is Sec-independent protein translocase protein TatA, found in Corynebacterium efficiens (strain DSM 44549 / YS-314 / AJ 12310 / JCM 11189 / NBRC 100395).